We begin with the raw amino-acid sequence, 255 residues long: Acetyl-coenzyme A carboxylase carboxyl transferase subunit alpha (255 aa).

The CoA carboxyltransferase C-terminal domain maps to 1–235 (MNIAKIVREA…KKELQTELAR (235 aa)).

The protein belongs to the AccA family. As to quaternary structure, acetyl-CoA carboxylase is a heterohexamer composed of biotin carboxyl carrier protein (AccB), biotin carboxylase (AccC) and two subunits each of ACCase subunit alpha (AccA) and ACCase subunit beta (AccD).

The protein resides in the cytoplasm. The enzyme catalyses N(6)-carboxybiotinyl-L-lysyl-[protein] + acetyl-CoA = N(6)-biotinyl-L-lysyl-[protein] + malonyl-CoA. It functions in the pathway lipid metabolism; malonyl-CoA biosynthesis; malonyl-CoA from acetyl-CoA: step 1/1. Component of the acetyl coenzyme A carboxylase (ACC) complex. First, biotin carboxylase catalyzes the carboxylation of biotin on its carrier protein (BCCP) and then the CO(2) group is transferred by the carboxyltransferase to acetyl-CoA to form malonyl-CoA. This chain is Acetyl-coenzyme A carboxylase carboxyl transferase subunit alpha, found in Streptococcus pneumoniae serotype 19F (strain G54).